A 156-amino-acid polypeptide reads, in one-letter code: Protein-export protein SecB (156 aa).

Belongs to the SecB family. Homotetramer, a dimer of dimers. One homotetramer interacts with 1 SecA dimer.

The protein resides in the cytoplasm. Its function is as follows. One of the proteins required for the normal export of preproteins out of the cell cytoplasm. It is a molecular chaperone that binds to a subset of precursor proteins, maintaining them in a translocation-competent state. It also specifically binds to its receptor SecA. The sequence is that of Protein-export protein SecB from Paraburkholderia xenovorans (strain LB400).